We begin with the raw amino-acid sequence, 289 residues long: Prepilin leader peptidase/N-methyltransferase (289 aa).

Residues 13–33 (AFVLCALVLGLLVGSFLNVVI) form a helical membrane-spanning segment. 4 residues coordinate Zn(2+): Cys-72, Cys-75, Cys-97, and Cys-100. The next 5 membrane-spanning stretches (helical) occupy residues 128-148 (FSWQ…MSMI), 159-179 (LVLP…FASL), 183-203 (LWGA…FKLV), 228-248 (VLPL…TVML), and 256-276 (GTPI…LLWG).

Belongs to the peptidase A24 family. The cofactor is Zn(2+).

It is found in the cell inner membrane. It carries out the reaction Typically cleaves a -Gly-|-Phe- bond to release an N-terminal, basic peptide of 5-8 residues from type IV prepilin, and then N-methylates the new N-terminal amino group, the methyl donor being S-adenosyl-L-methionine.. Plays an essential role in type IV pili and type II pseudopili formation by proteolytically removing the leader sequence from substrate proteins and subsequently monomethylating the alpha-amino group of the newly exposed N-terminal phenylalanine. The sequence is that of Prepilin leader peptidase/N-methyltransferase (pilD) from Stutzerimonas stutzeri (Pseudomonas stutzeri).